Consider the following 341-residue polypeptide: L-threonine 3-dehydrogenase (341 aa).

A Zn(2+)-binding site is contributed by Cys38. Residues Thr40 and His43 each act as charge relay system in the active site. Positions 63, 64, 93, 96, 99, and 107 each coordinate Zn(2+). NAD(+) is bound by residues Ile175, Asp195, Arg200, 262–264 (LGI), and 286–287 (IY).

Belongs to the zinc-containing alcohol dehydrogenase family. In terms of assembly, homotetramer. It depends on Zn(2+) as a cofactor.

It is found in the cytoplasm. It carries out the reaction L-threonine + NAD(+) = (2S)-2-amino-3-oxobutanoate + NADH + H(+). It functions in the pathway amino-acid degradation; L-threonine degradation via oxydo-reductase pathway; glycine from L-threonine: step 1/2. Functionally, catalyzes the NAD(+)-dependent oxidation of L-threonine to 2-amino-3-ketobutyrate. The protein is L-threonine 3-dehydrogenase of Solibacter usitatus (strain Ellin6076).